The primary structure comprises 430 residues: Enolase (430 aa).

Position 168 (Gln-168) interacts with (2R)-2-phosphoglycerate. The active-site Proton donor is the Glu-210. 3 residues coordinate Mg(2+): Asp-247, Glu-288, and Asp-315. (2R)-2-phosphoglycerate-binding residues include Lys-340, Arg-369, Ser-370, and Lys-391. Lys-340 acts as the Proton acceptor in catalysis.

Belongs to the enolase family. Requires Mg(2+) as cofactor.

The protein localises to the cytoplasm. The protein resides in the secreted. It is found in the cell surface. It carries out the reaction (2R)-2-phosphoglycerate = phosphoenolpyruvate + H2O. Its pathway is carbohydrate degradation; glycolysis; pyruvate from D-glyceraldehyde 3-phosphate: step 4/5. Functionally, catalyzes the reversible conversion of 2-phosphoglycerate (2-PG) into phosphoenolpyruvate (PEP). It is essential for the degradation of carbohydrates via glycolysis. This is Enolase from Rippkaea orientalis (strain PCC 8801 / RF-1) (Cyanothece sp. (strain PCC 8801)).